We begin with the raw amino-acid sequence, 231 residues long: Killer cell lectin-like receptor subfamily F member 1 (231 aa).

At 1-38 (MQDEERYMTLNVQSKKRSSAQTSQLTFKDYSVTLHWYK) the chain is on the cytoplasmic side. At Y7 the chain carries Phosphotyrosine. A helical; Signal-anchor for type II membrane protein membrane pass occupies residues 39-59 (ILLGISGTVNGILTLTLISLI). The Extracellular segment spans residues 60–231 (LLVSQGVLLK…SSVFKWICQY (172 aa)). N-linked (GlcNAc...) asparagine glycans are attached at residues N77, N91, N96, and N176. Residues 121-230 (YQGKCYWFSN…CSSVFKWICQ (110 aa)) enclose the C-type lectin domain. 2 disulfides stabilise this stretch: C142–C229 and C208–C221.

As to quaternary structure, homodimer. Interacts with CLEC2B. Phosphorylated on Tyr-7; this phosphorylation is required for NKp80/KLRF1-mediated cytotoxicity. As to expression, strongly expressed in peripheral blood leukocytes and spleen, with weaker expression in lymph node and adult liver, and no expression detected in bone marrow, thymus, and fetal liver. Not expressed in brain, heart, placenta, lung, kidney, skeletal muscle, and pancreas. Within peripheral blood leukocyte and immunocyte cell lines, expression was predominant in NK cells but was also detected in monocytes.

It is found in the membrane. In terms of biological role, functions as an activating receptor involved in immunosurveillance upon binding to various ligands displayed at the surface of myeloid cells. Upon interaction with CLEC2B ligand, stimulates NK-cell cytotoxicity and cytokine production leading to the cytolysis of malignant CLEC2B-expressing myeloid cells. Actviation of the common cytotoxicity pathway involves SRC and SYK kinases. This is Killer cell lectin-like receptor subfamily F member 1 (KLRF1) from Homo sapiens (Human).